The following is a 197-amino-acid chain: Phosphoheptose isomerase (197 aa).

In terms of domain architecture, SIS spans 37-197 (MLQCLMNDGK…CIDSVLLEGM (161 aa)). Position 52 to 54 (52 to 54 (NGG)) interacts with substrate. Residues H61 and E65 each contribute to the Zn(2+) site. Residues E65, 94–95 (ND), 120–122 (STS), S125, and Q175 contribute to the substrate site. Zn(2+)-binding residues include Q175 and H183.

This sequence belongs to the SIS family. GmhA subfamily. Homotetramer. It depends on Zn(2+) as a cofactor.

The protein localises to the cytoplasm. It catalyses the reaction 2 D-sedoheptulose 7-phosphate = D-glycero-alpha-D-manno-heptose 7-phosphate + D-glycero-beta-D-manno-heptose 7-phosphate. It functions in the pathway carbohydrate biosynthesis; D-glycero-D-manno-heptose 7-phosphate biosynthesis; D-glycero-alpha-D-manno-heptose 7-phosphate and D-glycero-beta-D-manno-heptose 7-phosphate from sedoheptulose 7-phosphate: step 1/1. In terms of biological role, catalyzes the isomerization of sedoheptulose 7-phosphate in D-glycero-D-manno-heptose 7-phosphate. The protein is Phosphoheptose isomerase of Neisseria meningitidis serogroup C (strain 053442).